We begin with the raw amino-acid sequence, 141 residues long: Galactose-6-phosphate isomerase subunit LacA 1 (141 aa).

The protein belongs to the LacAB/RpiB family. In terms of assembly, heteromultimeric protein consisting of LacA and LacB.

The enzyme catalyses aldehydo-D-galactose 6-phosphate = keto-D-tagatose 6-phosphate. Its pathway is carbohydrate metabolism; D-galactose 6-phosphate degradation; D-tagatose 6-phosphate from D-galactose 6-phosphate: step 1/1. This Streptococcus pyogenes serotype M1 protein is Galactose-6-phosphate isomerase subunit LacA 1.